Here is a 134-residue protein sequence, read N- to C-terminus: Cytochrome b5 (134 aa).

N-acetylalanine is present on Ala-2. 3 positions are modified to N6-acetyllysine: Lys-7, Lys-10, and Lys-19. In terms of domain architecture, Cytochrome b5 heme-binding spans 9–85; sequence VKYYTLEEIK…SKTFIIGELH (77 aa). Residues His-44 and His-68 each contribute to the heme site. The chain crosses the membrane as a helical span at residues 109–131; that stretch reads WWTNWVIPAISALIVALMYRLYM.

This sequence belongs to the cytochrome b5 family.

It localises to the endoplasmic reticulum membrane. Its subcellular location is the microsome membrane. Its function is as follows. Cytochrome b5 is a membrane-bound hemoprotein functioning as an electron carrier for several membrane-bound oxygenases. The protein is Cytochrome b5 (CYB5A) of Oryctolagus cuniculus (Rabbit).